Reading from the N-terminus, the 542-residue chain is MPAKEIKYDMQAREKIMKGVDTLANAVKVTLGPKGRNVAIAKSWGAPQVTKDGVTVAKEIELEDKFENMGAQMVKEVASKTSDKAGDGTTTATVLAQAIYREGSKLVVSGMNPMSLKRGIDKGVALVVDELKKRSKTISDKKEIAQIGTISANNDATIGNIISEAMEKVGKDGVITVEEAKGMETELEIVEGMQFDRGYVSPYFVTDAEKMEVRLDDPYILLHEKKISAMKDMVPLLEQIAKTGKPLLLVAEDIEGEALATLVVNKMRGTLKCVAVKAPGFGDRRKAMLQDIAVLTGGNLISEDVGIKLENVTLQDLGTCKKVTVDKDNTTIVDGAGNRADIEGRVKQIRAEIEETKSDYDREKLQERLAKIVGGVAVIRVGAATEIEMKEKKARVEDALHATRAAVEEGIVPGGGVAFIRSIGALADAKLPDEEQQGLNIVRRALEEPLRQIAANAGCEGSIVVEKVKESNGTHGFDAETEQYVDMLKAGIIDPTKVARFALQNAASVASLLLTTEAMIAEKPKKKEPPMPAMPSDMGDYD.

ATP is bound by residues 30–33, lysine 51, 87–91, glycine 415, and aspartate 494; these read TLGP and DGTTT. The tract at residues 523 to 542 is disordered; that stretch reads KPKKKEPPMPAMPSDMGDYD.

The protein belongs to the chaperonin (HSP60) family. In terms of assembly, forms a cylinder of 14 subunits composed of two heptameric rings stacked back-to-back. Interacts with the co-chaperonin GroES.

It is found in the cytoplasm. The catalysed reaction is ATP + H2O + a folded polypeptide = ADP + phosphate + an unfolded polypeptide.. In terms of biological role, together with its co-chaperonin GroES, plays an essential role in assisting protein folding. The GroEL-GroES system forms a nano-cage that allows encapsulation of the non-native substrate proteins and provides a physical environment optimized to promote and accelerate protein folding. The protein is Chaperonin GroEL 3 of Syntrophus aciditrophicus (strain SB).